The chain runs to 104 residues: Large ribosomal subunit protein uL24 (104 aa).

The protein belongs to the universal ribosomal protein uL24 family. Part of the 50S ribosomal subunit.

Its function is as follows. One of two assembly initiator proteins, it binds directly to the 5'-end of the 23S rRNA, where it nucleates assembly of the 50S subunit. Functionally, one of the proteins that surrounds the polypeptide exit tunnel on the outside of the subunit. The protein is Large ribosomal subunit protein uL24 of Saccharopolyspora erythraea (strain ATCC 11635 / DSM 40517 / JCM 4748 / NBRC 13426 / NCIMB 8594 / NRRL 2338).